The following is a 286-amino-acid chain: 4-diphosphocytidyl-2-C-methyl-D-erythritol kinase (286 aa).

The active site involves Lys12. 96–106 lines the ATP pocket; it reads PHGAGLGGGSA. Asp138 is a catalytic residue.

Belongs to the GHMP kinase family. IspE subfamily.

It catalyses the reaction 4-CDP-2-C-methyl-D-erythritol + ATP = 4-CDP-2-C-methyl-D-erythritol 2-phosphate + ADP + H(+). It functions in the pathway isoprenoid biosynthesis; isopentenyl diphosphate biosynthesis via DXP pathway; isopentenyl diphosphate from 1-deoxy-D-xylulose 5-phosphate: step 3/6. Functionally, catalyzes the phosphorylation of the position 2 hydroxy group of 4-diphosphocytidyl-2C-methyl-D-erythritol. This is 4-diphosphocytidyl-2-C-methyl-D-erythritol kinase from Nitratidesulfovibrio vulgaris (strain DP4) (Desulfovibrio vulgaris).